The sequence spans 141 residues: Large ribosomal subunit protein uL16 (141 aa).

This sequence belongs to the universal ribosomal protein uL16 family. Part of the 50S ribosomal subunit.

In terms of biological role, binds 23S rRNA and is also seen to make contacts with the A and possibly P site tRNAs. This Hydrogenobaculum sp. (strain Y04AAS1) protein is Large ribosomal subunit protein uL16.